The following is a 425-amino-acid chain: UDP-N-acetylglucosamine 1-carboxyvinyltransferase (425 aa).

23–24 (KN) contacts phosphoenolpyruvate. Position 100 (Arg-100) interacts with UDP-N-acetyl-alpha-D-glucosamine. Cys-124 (proton donor) is an active-site residue. Cys-124 is subject to 2-(S-cysteinyl)pyruvic acid O-phosphothioketal. Residues Asp-313 and Ile-335 each coordinate UDP-N-acetyl-alpha-D-glucosamine.

It belongs to the EPSP synthase family. MurA subfamily.

The protein resides in the cytoplasm. It catalyses the reaction phosphoenolpyruvate + UDP-N-acetyl-alpha-D-glucosamine = UDP-N-acetyl-3-O-(1-carboxyvinyl)-alpha-D-glucosamine + phosphate. Its pathway is cell wall biogenesis; peptidoglycan biosynthesis. Its function is as follows. Cell wall formation. Adds enolpyruvyl to UDP-N-acetylglucosamine. In Wolbachia sp. subsp. Drosophila simulans (strain wRi), this protein is UDP-N-acetylglucosamine 1-carboxyvinyltransferase.